Here is a 147-residue protein sequence, read N- to C-terminus: Small ribosomal subunit protein eS10B (147 aa).

Residues 90-147 (THKRQVRPAAPRAGRPEPRERSSAADAGYRRAEKKDDGAAPGGFAPSFRGGFGRPVAA) form a disordered region. A compositionally biased stretch (basic and acidic residues) spans 103–127 (GRPEPRERSSAADAGYRRAEKKDDG).

This sequence belongs to the eukaryotic ribosomal protein eS10 family. As to quaternary structure, component of the small ribosomal subunit (SSU). Mature yeast ribosomes consist of a small (40S) and a large (60S) subunit. The 40S small subunit contains 1 molecule of ribosomal RNA (18S rRNA) and at least 33 different proteins. The large 60S subunit contains 3 rRNA molecules (25S, 5.8S and 5S rRNA) and at least 46 different proteins. eS10 interacts with GCN1 (via middle region); this interaction is direct and promotes GCN2 kinase activity.

The protein resides in the cytoplasm. Component of the ribosome, a large ribonucleoprotein complex responsible for the synthesis of proteins in the cell. The small ribosomal subunit (SSU) binds messenger RNAs (mRNAs) and translates the encoded message by selecting cognate aminoacyl-transfer RNA (tRNA) molecules. The large subunit (LSU) contains the ribosomal catalytic site termed the peptidyl transferase center (PTC), which catalyzes the formation of peptide bonds, thereby polymerizing the amino acids delivered by tRNAs into a polypeptide chain. The nascent polypeptides leave the ribosome through a tunnel in the LSU and interact with protein factors that function in enzymatic processing, targeting, and the membrane insertion of nascent chains at the exit of the ribosomal tunnel. eS10 plays a role as a positive regulator of the GCN2 kinase activity by stimulating GCN1-mediated GCN2 activation. This chain is Small ribosomal subunit protein eS10B (rps1002), found in Schizosaccharomyces pombe (strain 972 / ATCC 24843) (Fission yeast).